The chain runs to 321 residues: Serpentine receptor class delta-63 (321 aa).

7 helical membrane-spanning segments follow: residues 14-34 (LVYMICLMLYITMYILIYNFT), 41-61 (VKYFLYPSCTAMLIAMTMAFA), 83-103 (YIGPTFCFYCYNLYTAFGIVV), 128-148 (LWTLVFMWHYLCPLIYLIVII), 190-208 (AAMSLSLISMYYPLIGTYW), 240-260 (NFQILLPMLRYIPLTAIYFMI), and 273-293 (TITVLGTIPCILDPLVQIYFI).

It belongs to the nematode receptor-like protein srd family.

Its subcellular location is the membrane. The chain is Serpentine receptor class delta-63 (srd-63) from Caenorhabditis elegans.